The primary structure comprises 839 residues: ABC transporter A family member 7 (839 aa).

7 helical membrane-spanning segments follow: residues 30-50 (GVQIAIPMALVIVLVILKLWI), 238-258 (IASLLGGSFFPFALSFVLPLF), 286-306 (IMTFIFNFLTYVVIVSVISLI), 321-341 (FALFLLLFLWGLSMVSFAFFL), 352-372 (SIFGYFFVMVMVNLNSTLSLF), 378-398 (VFYYWVPILAFSRGISTLCGL), and 419-439 (ILFWLFIDTIVYLTLAVYLDK). The ABC transporter domain occupies 525-756 (LIVQGLRKQF…FGDGYSVRID (232 aa)). 559 to 566 (GPNGAGKT) contacts ATP.

Belongs to the ABC transporter superfamily. ABCA family.

The protein localises to the membrane. The polypeptide is ABC transporter A family member 7 (abcA7) (Dictyostelium discoideum (Social amoeba)).